Reading from the N-terminus, the 652-residue chain is MKNTHVDLICVFLSIFIGIGEAVDVYTNHFHVHLKEGGGLEDAHRIAKRHGFINRGQVAASDNEYHFVQPALVHARTRRSAGHHAKLHNDDEVLHVEQLKGYTRTKRGYRPLEQRLESQFDFSAVMSPSDPLYGYQWYLKNTGQAGGKARLDLNVERAWAMGFTGKNITTAIMDDGVDYMHPDIKNNFNAEASYDFSSNDPFPYPRYTDDWFNSHGTRCAGEIVAARDNGVCGVGVAYDGKVAGIRMLDQPYMTDLIEANSMGHEPSKIHIYSASWGPTDDGKTVDGPRNATMRAIVRGVNEGRNGLGSIFVWASGDGGEDDDCNCDGYAASMWTISINSAINNGENAHYDESCSSTLASTFSNGGRNPETGVATTDLYGRCTRSHSGTSAAAPEAAGVFALALEANPSLTWRDLQHLTVLTSSRNSLFDGRCRDFPSLGINDNHRDSHGNCSHFEWQMNGVGLEYNHLFGFGVLDAAEMVMLAMAWKTSPPRYHCTAGLIDTPHEIPADGNLILEINTDGCAGSQFEVRYLEHVQAVVSFNSTRRGDTTLYLISPMGTRTMILSRRPKDDDSKDGFTNWPFMTTHTWGENPTGKWRLVARFQGPGAHAGTLKKFELMLHGTREAPYNLIEPIVGQTNKKLDTVQKAHKRSH.

An N-terminal signal peptide occupies residues 1–22 (MKNTHVDLICVFLSIFIGIGEA). Positions 23-107 (VDVYTNHFHV…QLKGYTRTKR (85 aa)) are excised as a propeptide. Residues 136–481 (QWYLKNTGQA…FGVLDAAEMV (346 aa)) enclose the Peptidase S8 domain. Asn167 carries an N-linked (GlcNAc...) asparagine glycan. Active-site charge relay system residues include Asp174 and His215. Disulfide bonds link Cys232–Cys382 and Cys324–Cys354. Asn290 carries N-linked (GlcNAc...) asparagine glycosylation. Ser390 (charge relay system) is an active-site residue. A glycan (N-linked (GlcNAc...) asparagine) is linked at Asn451. The region spanning 489–625 (TSPPRYHCTA…ELMLHGTREA (137 aa)) is the P/Homo B domain. Cys496 and Cys522 are joined by a disulfide. A required for ubiquitination-mediated degradation region spans residues 501 to 652 (IDTPHEIPAD…TVQKAHKRSH (152 aa)). Asn542 is a glycosylation site (N-linked (GlcNAc...) asparagine).

Belongs to the peptidase S8 family. Furin subfamily. As to quaternary structure, interacts (via C-terminus) with F-box protein fsn-1 (via SPRY domain); the interaction results in egl-3 proteasomal degradation. In terms of processing, ubiquitinated. In terms of tissue distribution, expressed in head and tail ganglia. Expressed in neurons including mechanosensory and motor neurons, and interneurons (at protein level). Expressed in the nerve ring, ventral nerve cord and intestine.

Its subcellular location is the cell projection. It localises to the axon. The protein resides in the cytoplasmic vesicle. It is found in the secretory vesicle lumen. The protein localises to the secreted. It carries out the reaction Release of protein hormones and neuropeptides from their precursors, generally by hydrolysis of -Lys-Arg-|- bonds.. Functionally, serine endoprotease which cleaves preproteins at paired basic amino acids. Processes FMRFamide-like (flp) and neuropeptide-like protein (nlp) neuropeptides. Probably by processing flp-1 and flp-18, modulates the neuronal excitation-inhibition balance and thus the level of activity of the locomotor circuit. Regulates sensitivity to mechanosensory stimuli. By processing neuropeptides, modulates basal acetylcholine release at the ventral cord neuromuscular junctions. Probably by processing flp neuropeptides, regulates the turning step of male mating behavior. Cleaves pro-insulin-like proteins ins-3, ins-4 and ins-6 into their mature active forms. Together with convertase kpc-1, cleaves pro-insulin-like protein ins-18. By controlling ins-4 and ins-6 processing and thus the activation of the daf-2/InsR pathway, negatively modulates synapse development and synaptic transmission at neuromuscular junctions. Similarly, by controlling ins-4 and ins-6 processing, negatively regulates dauer formation under optimal environmental conditions. Under adverse environmental conditions, may promote dauer formation by processing ins-18, a daf-2/InsR antagonist. May cleave dense-core vesicle membrane protein ida-1. Involved in egg-laying, fat storage and locomotion. In Caenorhabditis elegans, this protein is Neuroendocrine convertase 2.